The chain runs to 395 residues: Prostaglandin D2 receptor 2 (395 aa).

Residues 1 to 33 (MSANATLKPLCPILEQMSRLQSHSNTSIRYIDH) lie on the Extracellular side of the membrane. N-linked (GlcNAc...) asparagine glycans are attached at residues Asn-4 and Asn-25. The chain crosses the membrane as a helical span at residues 34 to 56 (AAVLLHGLASLLGLVENGVILFV). The Cytoplasmic segment spans residues 57–67 (VGCRMRQTVVT). Residues 68–89 (TWVLHLALSDLLASASLPFFTY) traverse the membrane as a helical segment. Residues 90–106 (FLAVGHSWELGTTFCKL) lie on the Extracellular side of the membrane. The cysteines at positions 104 and 182 are disulfide-linked. A helical transmembrane segment spans residues 107-127 (HSSIFFLNMFASGFLLSAISL). The Cytoplasmic segment spans residues 128-146 (DRCLQVVRPVWAQNHRTVA). A helical membrane pass occupies residues 147–168 (AAHKVCLVLWALAVLNTVPYFV). The Extracellular portion of the chain corresponds to 169-210 (FRDTISRLDGRIMCYYNVLLLNPGPDRDATCNSRQVALAVSK). A helical membrane pass occupies residues 211–231 (FLLAFLVPLAIIASSHAAVSL). The Cytoplasmic segment spans residues 232–247 (RLQHRGRRRPGRFVRL). The chain crosses the membrane as a helical span at residues 248-269 (VAAVVAAFALCWGPYHVFSLLE). Residues 270–288 (ARAHANPGLRPLVWRGLPF) lie on the Extracellular side of the membrane. A helical membrane pass occupies residues 289-308 (VTSLAFFNSVANPVLYVLTC). At 309–395 (PDMLRKLRRS…LNRALSSTSS (87 aa)) the chain is on the cytoplasmic side. The Involved in the recycling of CRTH2 signature appears at 330–333 (DSEL). A phosphoserine mark is found at Ser-331 and Ser-345. Positions 333-363 (LGGAGSSRRRRTSSTARSASPLALCSRPEEP) are disordered.

This sequence belongs to the G-protein coupled receptor 1 family. Post-translationally, phosphorylated. In terms of tissue distribution, widespread expression. High expression in stomach, small intestine, heart and thymus. Intermediate expression in colon, spinal cord and peripheral blood and low expression in brain, skeletal muscle and spleen. Expressed also on Th2- and Tc2- type cells, eosinophils and basophils.

Its subcellular location is the cell membrane. Functionally, receptor for prostaglandin D2 (PGD2). Coupled to the G(i)-protein. Receptor activation may result in pertussis toxin-sensitive decreases in cAMP levels and Ca(2+) mobilization. PI3K signaling is also implicated in mediating PTGDR2 effects. PGD2 induced receptor internalization. CRTH2 internalization can be regulated by diverse kinases such as, PKC, PKA, GRK2, GPRK5/GRK5 and GRK6. Receptor activation is responsible, at least in part, in immune regulation and allergic/inflammation responses. The polypeptide is Prostaglandin D2 receptor 2 (PTGDR2) (Homo sapiens (Human)).